The sequence spans 62 residues: Inner membrane protein p12 (62 aa).

A helical membrane pass occupies residues 16–36 (LLIVAIIVVIMAIMLYYFWWM).

The protein belongs to the asfivirus inner membrane protein p12 family. As to quaternary structure, homomultimer; disulfide-linked. In terms of processing, not glycosylated.

It localises to the virion membrane. In African swine fever virus (isolate Tick/Malawi/Lil 20-1/1983) (ASFV), this protein is Inner membrane protein p12.